A 231-amino-acid polypeptide reads, in one-letter code: Superoxide dismutase [Mn] 1, mitochondrial (231 aa).

A mitochondrion-targeting transit peptide spans 1–29 (MAIRCVASRKTLAGLKETSSRLLRIRGIQ). Residues His-55 and His-103 each contribute to the Mn(2+) site. Position 124 is a phosphoserine (Ser-124). Positions 192 and 196 each coordinate Mn(2+).

Belongs to the iron/manganese superoxide dismutase family. In terms of assembly, homotetramer. Requires Mn(2+) as cofactor.

The protein resides in the mitochondrion matrix. The enzyme catalyses 2 superoxide + 2 H(+) = H2O2 + O2. Activated by MTM1. Destroys superoxide anion radicals which are normally produced within the cells and which are toxic to biological systems. This chain is Superoxide dismutase [Mn] 1, mitochondrial (MSD1), found in Arabidopsis thaliana (Mouse-ear cress).